A 129-amino-acid polypeptide reads, in one-letter code: Lysozyme C (129 aa).

The 129-residue stretch at 1–129 (KVYGRCELAA…VNAWTRGCRL (129 aa)) folds into the C-type lysozyme domain. 4 disulfide bridges follow: Cys6/Cys127, Cys30/Cys115, Cys64/Cys80, and Cys76/Cys94. Residues Glu35 and Asp52 contribute to the active site.

It belongs to the glycosyl hydrolase 22 family. Monomer.

It is found in the secreted. It catalyses the reaction Hydrolysis of (1-&gt;4)-beta-linkages between N-acetylmuramic acid and N-acetyl-D-glucosamine residues in a peptidoglycan and between N-acetyl-D-glucosamine residues in chitodextrins.. In terms of biological role, lysozymes have primarily a bacteriolytic function; those in tissues and body fluids are associated with the monocyte-macrophage system and enhance the activity of immunoagents. This is Lysozyme C (LYZ) from Chrysolophus amherstiae (Lady Amherst's pheasant).